The primary structure comprises 252 residues: Cytochrome c oxidase subunit 2 (252 aa).

Over 1 to 39 the chain is Mitochondrial intermembrane; that stretch reads MFLIMLKGHILMDAPTPWGIFFQDSASPQMEGIMELHNN. A helical transmembrane segment spans residues 40-59; sequence IMFYLAIILFTVTWMMITII. The Mitochondrial matrix portion of the chain corresponds to 60–81; sequence RNFVAKKSPIAHKYMNHGTLIE. The helical transmembrane segment at 82-105 threads the bilayer; that stretch reads LIWTITPAFILILIAFPSFKLLYL. At 106-252 the chain is on the mitochondrial intermembrane side; the sequence is MDEVMDPSLV…LLWLRDQMEG (147 aa). Cu cation contacts are provided by histidine 184, cysteine 219, glutamate 221, cysteine 223, histidine 227, and methionine 230. Glutamate 221 is a binding site for Mg(2+).

This sequence belongs to the cytochrome c oxidase subunit 2 family. In terms of assembly, component of the cytochrome c oxidase (complex IV, CIV), a multisubunit enzyme composed of a catalytic core of 3 subunits and several supernumerary subunits. The complex exists as a monomer or a dimer and forms supercomplexes (SCs) in the inner mitochondrial membrane with ubiquinol-cytochrome c oxidoreductase (cytochrome b-c1 complex, complex III, CIII). Cu cation serves as cofactor.

It is found in the mitochondrion inner membrane. The catalysed reaction is 4 Fe(II)-[cytochrome c] + O2 + 8 H(+)(in) = 4 Fe(III)-[cytochrome c] + 2 H2O + 4 H(+)(out). Functionally, component of the cytochrome c oxidase, the last enzyme in the mitochondrial electron transport chain which drives oxidative phosphorylation. The respiratory chain contains 3 multisubunit complexes succinate dehydrogenase (complex II, CII), ubiquinol-cytochrome c oxidoreductase (cytochrome b-c1 complex, complex III, CIII) and cytochrome c oxidase (complex IV, CIV), that cooperate to transfer electrons derived from NADH and succinate to molecular oxygen, creating an electrochemical gradient over the inner membrane that drives transmembrane transport and the ATP synthase. Cytochrome c oxidase is the component of the respiratory chain that catalyzes the reduction of oxygen to water. Electrons originating from reduced cytochrome c in the intermembrane space (IMS) are transferred via the dinuclear copper A center (CU(A)) of subunit 2 and heme A of subunit 1 to the active site in subunit 1, a binuclear center (BNC) formed by heme A3 and copper B (CU(B)). The BNC reduces molecular oxygen to 2 water molecules using 4 electrons from cytochrome c in the IMS and 4 protons from the mitochondrial matrix. The protein is Cytochrome c oxidase subunit 2 (cox2) of Emericella nidulans (Aspergillus nidulans).